Here is a 504-residue protein sequence, read N- to C-terminus: Fumitremorgin C monooxygenase (504 aa).

Residues 9–29 (LPYPGVVGASLLVILGIILLF) traverse the membrane as a helical segment. Cys-442 serves as a coordination point for heme.

The protein belongs to the cytochrome P450 family. Heme serves as cofactor.

Its subcellular location is the membrane. It catalyses the reaction fumitremorgin C + 2 reduced [NADPH--hemoprotein reductase] + 2 O2 = 12alpha,13alpha-dihydroxyfumitremorgin C + 2 oxidized [NADPH--hemoprotein reductase] + 2 H2O + 2 H(+). It participates in mycotoxin biosynthesis. Cytochrome P450 monooxygenase; part of the gene cluster that mediates the biosynthesis of fumitremorgins, indole alkaloids that carry not only intriguing chemical structures, but also interesting biological and pharmacological activities. The biosynthesis of fumitremorgin-type alkaloids begins by condensation of the two amino acids L-tryptophan and L-proline to brevianamide F, catalyzed by the non-ribosomal peptide synthetase ftmPS/ftmA. Brevianamide F is then prenylated by the prenyltransferase ftmPT1/ftmB in the presence of dimethylallyl diphosphate, resulting in the formation of tryprostatin B. The three cytochrome P450 monooxygenases, ftmP450-1/ftmC, ftmP450-2/ftmE and ftmP450-3/FtmG, are responsible for the conversion of tryprostatin B to 6-hydroxytryprostatin B, tryprostatin A to fumitremorgin C and fumitremorgin C to 12,13-dihydroxyfumitremorgin C, respectively. The putative methyltransferase ftmMT/ftmD is expected for the conversion of 6-hydroxytryprostatin B to tryprostatin A. FtmPT2/FtmH catalyzes the prenylation of 12,13-dihydroxyfumitre-morgin C in the presence of dimethylallyl diphosphate, resulting in the formation of fumitremorgin B. Fumitremorgin B is further converted to verruculogen by ftmOx1/ftmF via the insertion of an endoperoxide bond between the two prenyl moieties. Finally, verruculogen is further converted to fumitremorgin A by the verruculogen prenyltransferase ftmPT3. The chain is Fumitremorgin C monooxygenase from Neosartorya fischeri (strain ATCC 1020 / DSM 3700 / CBS 544.65 / FGSC A1164 / JCM 1740 / NRRL 181 / WB 181) (Aspergillus fischerianus).